The chain runs to 466 residues: Asparagine--tRNA ligase (466 aa).

This sequence belongs to the class-II aminoacyl-tRNA synthetase family. In terms of assembly, homodimer.

The protein resides in the cytoplasm. The catalysed reaction is tRNA(Asn) + L-asparagine + ATP = L-asparaginyl-tRNA(Asn) + AMP + diphosphate + H(+). The polypeptide is Asparagine--tRNA ligase (Shewanella baltica (strain OS195)).